The sequence spans 207 residues: Ion-translocating oxidoreductase complex subunit G (207 aa).

Residues 11-31 (GILLGFIALLCTIISTGIFFL) traverse the membrane as a helical segment. Thr175 is modified (FMN phosphoryl threonine).

This sequence belongs to the RnfG family. In terms of assembly, the complex is composed of six subunits: RnfA, RnfB, RnfC, RnfD, RnfE and RnfG. Requires FMN as cofactor.

It is found in the cell inner membrane. Part of a membrane-bound complex that couples electron transfer with translocation of ions across the membrane. This Haemophilus influenzae (strain 86-028NP) protein is Ion-translocating oxidoreductase complex subunit G.